Reading from the N-terminus, the 66-residue chain is Large ribosomal subunit protein eL24 (66 aa).

Residues Cys-6, Cys-9, Cys-32, and Cys-36 each contribute to the Zn(2+) site. A C4-type zinc finger spans residues 6–36 (CSFCGKTIEPGTGIMYVRKDGAILYFCSNKC).

This sequence belongs to the eukaryotic ribosomal protein eL24 family. In terms of assembly, part of the 50S ribosomal subunit. Forms a cluster with proteins L3 and L14. Requires Zn(2+) as cofactor.

Functionally, binds to the 23S rRNA. The chain is Large ribosomal subunit protein eL24 from Thermoplasma volcanium (strain ATCC 51530 / DSM 4299 / JCM 9571 / NBRC 15438 / GSS1).